We begin with the raw amino-acid sequence, 20 residues long: Putative 18 kDa spermidine-binding protein (20 aa).

As to quaternary structure, dimer of 18 kDa and 60 kDa subunit.

It is found in the microsome membrane. The protein resides in the endoplasmic reticulum membrane. May have spermidine-binding activity. The sequence is that of Putative 18 kDa spermidine-binding protein from Zea mays (Maize).